The sequence spans 506 residues: Asparagine--tRNA ligase (506 aa).

This sequence belongs to the class-II aminoacyl-tRNA synthetase family. Homodimer.

The protein resides in the cytoplasm. The enzyme catalyses tRNA(Asn) + L-asparagine + ATP = L-asparaginyl-tRNA(Asn) + AMP + diphosphate + H(+). The sequence is that of Asparagine--tRNA ligase from Onion yellows phytoplasma (strain OY-M).